A 159-amino-acid polypeptide reads, in one-letter code: 2-C-methyl-D-erythritol 2,4-cyclodiphosphate synthase (159 aa).

Residues Asp-8 and His-10 each contribute to the a divalent metal cation site. Residues 8–10 (DVH) and 34–35 (HS) each bind 4-CDP-2-C-methyl-D-erythritol 2-phosphate. His-42 is an a divalent metal cation binding site. 4-CDP-2-C-methyl-D-erythritol 2-phosphate is bound by residues 56–58 (DIG), 100–106 (AQAPKMA), 132–135 (TTTE), Phe-139, and Arg-142.

Belongs to the IspF family. As to quaternary structure, homotrimer. Requires a divalent metal cation as cofactor.

It carries out the reaction 4-CDP-2-C-methyl-D-erythritol 2-phosphate = 2-C-methyl-D-erythritol 2,4-cyclic diphosphate + CMP. The protein operates within isoprenoid biosynthesis; isopentenyl diphosphate biosynthesis via DXP pathway; isopentenyl diphosphate from 1-deoxy-D-xylulose 5-phosphate: step 4/6. Its function is as follows. Involved in the biosynthesis of isopentenyl diphosphate (IPP) and dimethylallyl diphosphate (DMAPP), two major building blocks of isoprenoid compounds. Catalyzes the conversion of 4-diphosphocytidyl-2-C-methyl-D-erythritol 2-phosphate (CDP-ME2P) to 2-C-methyl-D-erythritol 2,4-cyclodiphosphate (ME-CPP) with a corresponding release of cytidine 5-monophosphate (CMP). This chain is 2-C-methyl-D-erythritol 2,4-cyclodiphosphate synthase, found in Marinobacter nauticus (strain ATCC 700491 / DSM 11845 / VT8) (Marinobacter aquaeolei).